A 551-amino-acid chain; its full sequence is Frizzled-2 (551 aa).

An N-terminal signal peptide occupies residues 1 to 26; that stretch reads MQGVTRASILLIIYHLFTLSLGQLHG. The Extracellular portion of the chain corresponds to 27 to 231; it reads EKGISVPEHG…FSQDEIRFAR (205 aa). One can recognise an FZ domain in the interval 33 to 152; it reads PEHGFCQPIS…HGAEQICVGQ (120 aa). 5 disulfides stabilise this stretch: Cys38-Cys99, Cys46-Cys92, Cys83-Cys120, Cys109-Cys149, and Cys113-Cys137. A glycan (N-linked (GlcNAc...) asparagine) is linked at Asn52. The N-linked (GlcNAc...) asparagine glycan is linked to Asn153. Residues 232–252 form a helical membrane-spanning segment; sequence IWILIWSVLCCASTFITVTTY. The Cytoplasmic segment spans residues 253 to 265; that stretch reads LVDMQRFRYPERP. The helical transmembrane segment at 266–286 threads the bilayer; that stretch reads IIFLSGCYTMVSVAYIAGFVL. Topologically, residues 287-313 are extracellular; that stretch reads GDKVVCNEGFSEDGYKTVVQGTKKEGC. The chain crosses the membrane as a helical span at residues 314–334; sequence TILFMMLYFFSMASSIWWVIL. At 335-356 the chain is on the cytoplasmic side; that stretch reads SLTWFLAAGMKWGHEAIEANSQ. Residues 357-377 traverse the membrane as a helical segment; it reads YFHLAAWAVPAVKTITILAMG. The Extracellular portion of the chain corresponds to 378–400; the sequence is QIDGDLLSGVCFVGLNNIDPLRG. The helical transmembrane segment at 401–421 threads the bilayer; sequence FVLAPLFVYLFIGTSFLLAGF. Residues 422 to 447 are Cytoplasmic-facing; it reads VSLFRIRTIMKHDGTKTEKLERLMVR. Residues 448-468 form a helical membrane-spanning segment; that stretch reads IGVFSVLYTVPATIVIACYFY. Residues 469-505 lie on the Extracellular side of the membrane; the sequence is EQAFREHWERSWVSQNCKSLAIPCPLQYTPRMTPDFT. The helical transmembrane segment at 506-526 threads the bilayer; sequence VYMIKYLMTLIVGITSGFWIW. Residues 527 to 534 are Cytoplasmic-facing; it reads SGKTLHSW. The Lys-Thr-X-X-X-Trp motif, mediates interaction with the PDZ domain of Dvl family members signature appears at 529–534; the sequence is KTLHSW. Positions 549–551 match the PDZ-binding motif; it reads TTV.

Belongs to the G-protein coupled receptor Fz/Smo family. Widely expressed, especially in the eye anlage, otic vesicle and developing somites.

It is found in the membrane. The protein resides in the cell membrane. In terms of biological role, receptor for Wnt proteins. Most of frizzled receptors are coupled to the beta-catenin canonical signaling pathway, which leads to the activation of disheveled proteins, inhibition of GSK-3 kinase, nuclear accumulation of beta-catenin and activation of Wnt target genes. A second signaling pathway involving PKC and calcium fluxes has been seen for some family members, but it is not yet clear if it represents a distinct pathway or if it can be integrated in the canonical pathway, as PKC seems to be required for Wnt-mediated inactivation of GSK-3 kinase. Both pathways seem to involve interactions with G-proteins. May be involved in transduction and intercellular transmission of polarity information during tissue morphogenesis and/or in differentiated tissues. The polypeptide is Frizzled-2 (fzd2) (Xenopus laevis (African clawed frog)).